The following is a 794-amino-acid chain: FT-interacting protein 1 (794 aa).

Residues 1–27 (MAAKDGAKSQEDYKLKDMKPELGERWP) show a composition bias toward basic and acidic residues. Residues 1–34 (MAAKDGAKSQEDYKLKDMKPELGERWPHGGQRGG) form a disordered region. C2 domains follow at residues 37-158 (WIGS…PQWY), 198-321 (VQGE…SKWY), and 364-492 (YISD…THSY). Ca(2+) is bound by residues Asp76, Asp123, Glu125, and Glu131. 4 helical membrane passes run 510–532 (LAVR…PLLP), 595–615 (IVSV…VCYW), 619–639 (LTTI…ELIL), and 737–757 (LFVI…FKII).

It belongs to the MCTP family. Interacts with FT in phloem companion cells. Ca(2+) serves as cofactor. As to expression, expressed in the vascular tissues of roots, cotyledons and rosette leaves. Specifically located in the phloem including companion cells. Observed in flowers. Not detected in the shoot apical meristem.

It localises to the endoplasmic reticulum membrane. The protein resides in the cell junction. It is found in the plasmodesma. Its function is as follows. Involved in the export of FT from the phloem companion cells to the sieve elements through the plasmodesmata. Regulates flowering time under long days. May function as a signaling molecule by regulating the trafficking of other regulators. In Arabidopsis thaliana (Mouse-ear cress), this protein is FT-interacting protein 1.